The sequence spans 209 residues: Uracil phosphoribosyltransferase (209 aa).

Residues Arg-79, Arg-104, and 131 to 139 (DPMLATGGS) each bind 5-phospho-alpha-D-ribose 1-diphosphate. Uracil is bound by residues Ile-194 and 199–201 (GDA). Asp-200 contributes to the 5-phospho-alpha-D-ribose 1-diphosphate binding site.

It belongs to the UPRTase family. The cofactor is Mg(2+).

It carries out the reaction UMP + diphosphate = 5-phospho-alpha-D-ribose 1-diphosphate + uracil. Its pathway is pyrimidine metabolism; UMP biosynthesis via salvage pathway; UMP from uracil: step 1/1. Allosterically activated by GTP. Catalyzes the conversion of uracil and 5-phospho-alpha-D-ribose 1-diphosphate (PRPP) to UMP and diphosphate. This is Uracil phosphoribosyltransferase from Ligilactobacillus salivarius (strain UCC118) (Lactobacillus salivarius).